The following is a 217-amino-acid chain: Vesicle transport through interaction with t-SNAREs homolog 1A (217 aa).

Residues 1 to 192 are Cytoplasmic-facing; the sequence is MDVFERTEQN…TGIARRLATN (192 aa). The stretch at 36–97 forms a coiled coil; that stretch reads AVREVENDID…AQLQSSNQTN (62 aa). The disordered stretch occupies residues 90 to 109; sequence LQSSNQTNSNPWSNAPDDYQ. The 63-residue stretch at 123–185 folds into the t-SNARE coiled-coil homology domain; that stretch reads SNMLDSTSDR…KSARKIMTGI (63 aa). The helical; Anchor for type IV membrane protein transmembrane segment at 193–213 threads the bilayer; it reads KVILSIIILLLMGIIALIICL. The Vesicular segment spans residues 214–217; it reads KWLR.

The protein belongs to the VTI1 family. Component of the SNARE complex composed of syn7A, syn8A, vamp7A and vti1A.

The protein resides in the membrane. It localises to the cytoplasmic vesicle. Its subcellular location is the secretory vesicle membrane. It is found in the clathrin-coated vesicle membrane. The protein localises to the endosome membrane. The protein resides in the endoplasmic reticulum membrane. Its function is as follows. V-SNARE that mediates vesicle transport pathways through interactions with t-SNAREs on the target membrane. These interactions are proposed to mediate aspects of the specificity of vesicle trafficking and to promote fusion of the lipid bilayers. The chain is Vesicle transport through interaction with t-SNAREs homolog 1A from Dictyostelium discoideum (Social amoeba).